Here is an 852-residue protein sequence, read N- to C-terminus: DNA repair protein rhp54 (852 aa).

2 consecutive short sequence motifs (nuclear localization signal) follow at residues 35 to 51 and 178 to 181; these read KKFK…RKEL and KRKK. Positions 187–205 are enriched in basic and acidic residues; sequence NRKGKKEISDSEPESDHDS. The interval 187 to 208 is disordered; it reads NRKGKKEISDSEPESDHDSCVS. The Helicase ATP-binding domain occupies 281–459; that stretch reads GRIDRCANGC…FSLLNFANPG (179 aa). 294 to 301 contributes to the ATP binding site; sequence DEMGLGKT. A DEGH box motif is present at residues 410–413; it reads DEGH. One can recognise a Helicase C-terminal domain in the interval 614 to 767; sequence VLERMLYQIK…CVVDEAQDVE (154 aa).

It belongs to the SNF2/RAD54 helicase family. Homohexamer. Interacts with rhp51.

The protein localises to the nucleus. The enzyme catalyses ATP + H2O = ADP + phosphate + H(+). In terms of biological role, plays an essential role in homologous recombination (HR) which is a major pathway for repairing DNA double-strand breaks (DSBs), single-stranded DNA (ssDNA) gaps, and stalled or collapsed replication forks. Acts as a molecular motor during the homology search and guides RAD51 ssDNA along a donor dsDNA thereby changing the homology search from the diffusion-based mechanism to a motor-guided mechanism. Plays also an essential role in RAD51-mediated synaptic complex formation which consists of three strands encased in a protein filament formed once homology is recognized. Once DNA strand exchange occured, dissociates RAD51 from nucleoprotein filaments formed on dsDNA. The polypeptide is DNA repair protein rhp54 (rhp54) (Schizosaccharomyces pombe (strain 972 / ATCC 24843) (Fission yeast)).